Here is a 430-residue protein sequence, read N- to C-terminus: Tol-Pal system protein TolB (430 aa).

Residues 1-19 (MKKQIFFTLILLISGLARA) form the signal peptide.

It belongs to the TolB family. The Tol-Pal system is composed of five core proteins: the inner membrane proteins TolA, TolQ and TolR, the periplasmic protein TolB and the outer membrane protein Pal. They form a network linking the inner and outer membranes and the peptidoglycan layer.

The protein resides in the periplasm. Part of the Tol-Pal system, which plays a role in outer membrane invagination during cell division and is important for maintaining outer membrane integrity. This chain is Tol-Pal system protein TolB, found in Hahella chejuensis (strain KCTC 2396).